A 100-amino-acid polypeptide reads, in one-letter code: Small ribosomal subunit protein uS14c (100 aa).

This sequence belongs to the universal ribosomal protein uS14 family. Part of the 30S ribosomal subunit.

It localises to the plastid. It is found in the chloroplast. Functionally, binds 16S rRNA, required for the assembly of 30S particles. This is Small ribosomal subunit protein uS14c from Calycanthus floridus var. glaucus (Eastern sweetshrub).